The sequence spans 888 residues: Autophagy-related protein 9 (888 aa).

The disordered stretch occupies residues 1–170 (MASNIFSRIK…PYTTPMGPQP (170 aa)). The Cytoplasmic portion of the chain corresponds to 1–255 (MASNIFSRIK…CTRKMSGLWN (255 aa)). Residues 13 to 24 (SGGSQSFYQQLR) show a composition bias toward polar residues. A compositionally biased stretch (acidic residues) spans 28-38 (DPEYDPGLDEE). Over residues 123–143 (RATNPGSSRTPASVGPSSART) the composition is skewed to polar residues. A helical membrane pass occupies residues 256–276 (FAIWLYTFFFIWKCVQYFVEI). At 277–422 (RRLTYIRDFY…RLLSQKLRQR (146 aa)) the chain is on the lumenal side. Residues 423-443 (FLFAGFLNLLFAPVVLAYVVI) form a helical membrane-spanning segment. Residues 444 to 511 (VYFFTYYYEY…PKRITEAVAR (68 aa)) are Cytoplasmic-facing. Residues 512 to 532 (TIAFMSGAITAILAIGSVLDS) lie within the membrane without spanning it. At 533-544 (ELFLNFEITKDR) the chain is on the cytoplasmic side. A helical transmembrane segment spans residues 545–565 (PVIFYLGVFAAIWATTRGMVS). Residues 566–611 (EETLVFNPEYALRNVIEYTRYVPDHWKNKLHSSEVKQEFSELYKMK) are Lumenal-facing. The helical transmembrane segment at 612–632 (VVIFLEEMMGIVTTPMLLLFS) threads the bilayer. The Cytoplasmic segment spans residues 633–642 (LPRCSDQIVD). An intramembrane segment occupies 643 to 663 (FFREFTIHVDGLGYVCSFAVF). Residues 664-888 (DFQKGPGNTG…QRPRRGGGMV (225 aa)) lie on the Cytoplasmic side of the membrane. Disordered regions lie at residues 748 to 770 (GRTG…PRIG) and 834 to 866 (EPGG…DPEA).

This sequence belongs to the ATG9 family. As to quaternary structure, homotrimer; forms a homotrimer with a central pore that forms a path between the two membrane leaflets. In terms of processing, phosphorylated by ATG1. ATG1 phosphorylation is required for ATG18 interaction and preautophagosome elongation.

It localises to the preautophagosomal structure membrane. Its subcellular location is the cytoplasmic vesicle membrane. It is found in the golgi apparatus membrane. The protein localises to the endoplasmic reticulum membrane. It carries out the reaction a 1,2-diacyl-sn-glycero-3-phosphocholine(in) = a 1,2-diacyl-sn-glycero-3-phosphocholine(out). It catalyses the reaction a 1,2-diacyl-sn-glycero-3-phospho-L-serine(in) = a 1,2-diacyl-sn-glycero-3-phospho-L-serine(out). The enzyme catalyses a 1,2-diacyl-sn-glycero-3-phosphoethanolamine(in) = a 1,2-diacyl-sn-glycero-3-phosphoethanolamine(out). The catalysed reaction is a 1,2-diacyl-sn-glycero-3-phospho-(1D-myo-inositol-3-phosphate)(in) = a 1,2-diacyl-sn-glycero-3-phospho-(1D-myo-inositol-3-phosphate)(out). Functionally, phospholipid scramblase involved in autophagy and cytoplasm to vacuole transport (Cvt) vesicle formation. Cycles between the preautophagosomal structure/phagophore assembly site (PAS) and the cytoplasmic vesicle pool and supplies membrane for the growing autophagosome. Lipid scramblase activity plays a key role in preautophagosomal structure/phagophore assembly by distributing the phospholipids that arrive through ATG2 from the cytoplasmic to the luminal leaflet of the bilayer, thereby driving autophagosomal membrane expansion. Required for mitophagy. Also involved in endoplasmic reticulum-specific autophagic process and is essential for the survival of cells subjected to severe ER stress. Different machineries are required for anterograde trafficking to the PAS during either the Cvt pathway or bulk autophagy and for retrograde trafficking. Autophagy is required for proper vegetative growth, asexual/sexual reproduction, and full virulence. Autophagy is particularly involved in the biosynthesis of deoxynivalenol (DON), an important virulence determinant. Required for aerial hyphae development and lipid droplet degradation in response to starvation. The sequence is that of Autophagy-related protein 9 from Gibberella zeae (strain ATCC MYA-4620 / CBS 123657 / FGSC 9075 / NRRL 31084 / PH-1) (Wheat head blight fungus).